We begin with the raw amino-acid sequence, 76 residues long: Small ribosomal subunit protein bS16 (76 aa).

Belongs to the bacterial ribosomal protein bS16 family.

This Helicobacter pylori (strain HPAG1) protein is Small ribosomal subunit protein bS16.